A 97-amino-acid polypeptide reads, in one-letter code: MANNKSAKKRIQIAERNRLMNKSYKSTVRTLTKKTLENCEKYKKNPNEDNKNLVKTSLNKAFSLIDKAVKKNVLHKNNGANRKSKINNFVKTTLTTK.

It belongs to the bacterial ribosomal protein bS20 family.

Functionally, binds directly to 16S ribosomal RNA. This chain is Small ribosomal subunit protein bS20, found in Prochlorococcus marinus (strain AS9601).